The chain runs to 545 residues: Glucose starvation modulator protein 1 (545 aa).

A DNA-binding region (zn(2)-C6 fungal-type) is located at residues 20-48; that stretch reads CGFCHEKHLQCDVGRPCQNCRKRNIASFC. The segment covering 51 to 60 has biased composition (basic residues); the sequence is KVKRRRKRKR. Disordered stretches follow at residues 51 to 131 and 228 to 270; these read KVKR…AMKD and YISL…WQQQ. Over residues 61–71 the composition is skewed to basic and acidic residues; that stretch reads SDASNFDKDEA. Polar residues predominate over residues 72–92; sequence ATQTLNFNTVNPGEGSSSAMT. Positions 98–110 are enriched in low complexity; sequence TGTTTATTTRTTT. Positions 111–125 are enriched in polar residues; sequence NFRSESKASSSTENI. Over residues 257-270 the composition is skewed to low complexity; the sequence is QQKESQQMQLWQQQ. Residues 416 to 486 enclose the PAS domain; that stretch reads ELENMSKLVN…DLFHEHLAFG (71 aa).

Belongs to the ERT1/acuK family.

It is found in the nucleus. Its function is as follows. Transcription factor which regulates nonfermentable carbon utilization. This Zygosaccharomyces rouxii (strain ATCC 2623 / CBS 732 / NBRC 1130 / NCYC 568 / NRRL Y-229) protein is Glucose starvation modulator protein 1 (GSM1).